The sequence spans 336 residues: Phenylalanine--tRNA ligase alpha subunit (336 aa).

Glu-251 serves as a coordination point for Mg(2+).

Belongs to the class-II aminoacyl-tRNA synthetase family. Phe-tRNA synthetase alpha subunit type 1 subfamily. In terms of assembly, tetramer of two alpha and two beta subunits. The cofactor is Mg(2+).

Its subcellular location is the cytoplasm. It carries out the reaction tRNA(Phe) + L-phenylalanine + ATP = L-phenylalanyl-tRNA(Phe) + AMP + diphosphate + H(+). The polypeptide is Phenylalanine--tRNA ligase alpha subunit (Syntrophobacter fumaroxidans (strain DSM 10017 / MPOB)).